A 1226-amino-acid chain; its full sequence is Polyamine-transporting ATPase 13A3 (1226 aa).

Residues 1–28 lie on the Cytoplasmic side of the membrane; that stretch reads MDKEERKIINQGQEDEMEIYGYNLSRWK. Residues 29–49 lie within the membrane without spanning it; sequence LAIVSLGVICTGGFLLLLLYW. Over 50–205 the chain is Cytoplasmic; it reads MPEWRVKATC…IAVKVPSVFK (156 aa). Ser98 is subject to Phosphoserine. A helical membrane pass occupies residues 206–226; the sequence is LLIKEVLNPFYIFQLFSVILW. At 227-232 the chain is on the lumenal side; the sequence is STDEYY. The chain crosses the membrane as a helical span at residues 233 to 253; sequence YYALAIVVMSIVSIVSSLYSI. At 254–409 the chain is on the cytoplasmic side; that stretch reads RKQYVMLHDM…KPTDFKLYRD (156 aa). Residues 410–430 traverse the membrane as a helical segment; it reads AYLFLLCLVAVAGIGFIYTII. Over 431–448 the chain is Lumenal; that stretch reads NSILNEVQVGVIIIESLD. A helical membrane pass occupies residues 449–469; sequence IITITVPPALPAAMTAGIVYA. At 470-940 the chain is on the cytoplasmic side; it reads QRRLKKIGIF…ALITSFCVFK (471 aa). Asp498 serves as the catalytic 4-aspartylphosphate intermediate. Mg(2+) is bound by residues Asp498 and Thr500. Residues 498-500, Phe628, Arg684, and Asp750 each bind ATP; that span reads DKT. Residue Ser817 is modified to Phosphoserine. Residue Asp883 participates in Mg(2+) binding. An ATP-binding site is contributed by 883 to 887; it reads DGAND. Residues 941-961 form a helical membrane-spanning segment; sequence FMALYSIIQYFSVTLLYSILS. Residue Asn962 is a topological domain, lumenal. The chain crosses the membrane as a helical span at residues 963–983; sequence LGDFQFLFIDLAIILVVVFTM. Topologically, residues 984 to 999 are cytoplasmic; sequence SLNPAWKELVAQRPPS. Residues 1000-1020 traverse the membrane as a helical segment; sequence GLISGALLFSVLSQIIICIGF. Residues 1021–1073 are Lumenal-facing; the sequence is QSLGFFWVKQQPWYEVWHPKSDACNATGSLLWNSSHLDNETELDEHNIQNYEN. The helical transmembrane segment at 1074–1094 threads the bilayer; that stretch reads TTVFFISSFQYLIVAIAFSKG. At 1095–1105 the chain is on the cytoplasmic side; that stretch reads KPFRQPCYKNY. Residues 1106–1126 form a helical membrane-spanning segment; it reads FFVFSVIFLYVFILFIMLYPV. The Lumenal segment spans residues 1127–1143; it reads ASVDQVLQIVCVPYQWR. A helical transmembrane segment spans residues 1144-1164; the sequence is VTMLIIVLVNAFVSITVEESV. The Cytoplasmic portion of the chain corresponds to 1165 to 1226; the sequence is DRWRKCCLPW…NGSCQIITIT (62 aa).

It belongs to the cation transport ATPase (P-type) (TC 3.A.3) family. Type V subfamily.

The protein resides in the recycling endosome membrane. Its subcellular location is the early endosome membrane. It is found in the late endosome membrane. The catalysed reaction is putrescine(out) + ATP + H2O = putrescine(in) + ADP + phosphate + H(+). ATP-driven pump involved in endocytosis-dependent polyamine transport. Uses ATP as an energy source to transfer polyamine precursor putrescine from the endosomal compartment to the cytosol. In Macaca fascicularis (Crab-eating macaque), this protein is Polyamine-transporting ATPase 13A3 (ATP13A3).